The chain runs to 811 residues: MLLLFHSKRMPVAEAPQVAGGQGDGGDGEEAEPEGMFKACEDSKRKARGYLRLVPLFVLLALLVLASAGVLLWYFLGYKAEVMVSQVYSGSLRVLNRHFSQDLTRRESSAFRSETAKAQKMLKELITSTRLGTYYNSSSVYSFGEGPLTCFFWFILQIPEHRRLMLSPEVVQALLVEELLSTVNSSAAVPYRAEYEVDPEGLVILEASVKDIAALNSTLGCYRYSYVGQGQVLRLKGPDHLASSCLWHLQGPKDLMLKLRLEWTLAECRDRLAMYDVAGPLEKRLITSVYGCSRQEPVVEVLASGAIMAVVWKKGLHSYYDPFVLSVQPVVFQACEVNLTLDNRLDSQGVLSTPYFPSYYSPQTHCSWHLTVPSLDYGLALWFDAYALRRQKYDLPCTQGQWTIQNRRLCGLRILQPYAERIPVVATAGITINFTSQISLTGPGVRVHYGLYNQSDPCPGEFLCSVNGLCVPACDGVKDCPNGLDERNCVCRATFQCKEDSTCISLPKVCDGQPDCLNGSDEEQCQEGVPCGTFTFQCEDRSCVKKPNPQCDGRPDCRDGSDEEHCDCGLQGPSSRIVGGAVSSEGEWPWQASLQVRGRHICGGALIADRWVITAAHCFQEDSMASTVLWTVFLGKVWQNSRWPGEVSFKVSRLLLHPYHEEDSHDYDVALLQLDHPVVRSAAVRPVCLPARSHFFEPGLHCWITGWGALREGGPISNALQKVDVQLIPQDLCSEVYRYQVTPRMLCAGYRKGKKDACQGDSGGPLVCKALSGRWFLAGLVSWGLGCGRPNYFGVYTRITGVISWIQQVVT.

Over M1–P55 the chain is Cytoplasmic. Residues L56 to L76 traverse the membrane as a helical; Signal-anchor for type II membrane protein segment. The Extracellular segment spans residues G77–T811. Positions V84 to V209 constitute an SEA domain. N136, N184, N216, N338, N433, and N453 each carry an N-linked (GlcNAc...) asparagine glycan. 2 CUB domains span residues A213 to E336 and C335 to Y452. C335 and C366 are joined by a disulfide. LDL-receptor class A domains lie at P457–C489, V490–Q526, and P530–D567. 10 disulfides stabilise this stretch: C458/C470, C464/C480, C474/C489, C491/C503, C497/C516, C510/C525, C531/C543, C538/C557, C551/C566, and C602/C618. N518 carries an N-linked (GlcNAc...) asparagine glycan. Positions I577–T811 constitute a Peptidase S1 domain. Residues H617 and D668 each act as charge relay system in the active site. 3 cysteine pairs are disulfide-bonded: C702-C768, C733-C747, and C758-C787. The Charge relay system role is filled by S762.

This sequence belongs to the peptidase S1 family. Interacts with HJV. The single-chain zymogen undergoes autoproteolytic processing. This results in TMPRSS6 shedding from the cell surface and conversion into an activated two-chains form which is released extracellularly. The process involves a trans-activation mechanism that requires TMPRSS6 oligomerization.

Its subcellular location is the cell membrane. Functionally, membrane-bound serine protease. Through the cleavage of cell surface hemojuvelin (HJV), a regulator of the expression of the iron absorption-regulating hormone hepicidin/HAMP, plays a role in iron homeostasis. The protein is Transmembrane protease serine 6 (TMPRSS6) of Homo sapiens (Human).